A 443-amino-acid polypeptide reads, in one-letter code: Glutamate-rich protein 1 (443 aa).

K12 is subject to N6-acetyllysine. Residues 15 to 333 (QRLFPPVPSG…DASEEDDTIT (319 aa)) form a disordered region. A compositionally biased stretch (basic and acidic residues) spans 42-54 (VTSEKVSQKHAEP). The span at 87–97 (SCGSPENASSG) shows a compositional bias: polar residues. Composition is skewed to basic residues over residues 109–124 (PKRRRIRKHKSKKKFK) and 159–176 (KNKKRKLKKKQQIKRKKA). Positions 205-226 (ACEEDGVDTSEEDPTLAGEEDV) are enriched in acidic residues. Phosphoserine is present on residues S238 and S254. A compositionally biased stretch (acidic residues) spans 250–266 (GADASEEDPTPAGEEDV). A Phosphothreonine modification is found at T277. A compositionally biased stretch (basic and acidic residues) spans 281–296 (DLTRAGEEDGKDTREE). The span at 297–332 (DGADASEEDPTWAGEEEGADSGEEDGADASEEDDTI) shows a compositional bias: acidic residues.

In Homo sapiens (Human), this protein is Glutamate-rich protein 1 (ERICH1).